The chain runs to 205 residues: Coenzyme Q-binding protein COQ10, mitochondrial (205 aa).

This sequence belongs to the COQ10 family. As to quaternary structure, interacts with coenzyme Q.

The protein localises to the mitochondrion inner membrane. In terms of biological role, required for the function of coenzyme Q in the respiratory chain. May serve as a chaperone or may be involved in the transport of Q6 from its site of synthesis to the catalytic sites of the respiratory complexes. In Dictyostelium discoideum (Social amoeba), this protein is Coenzyme Q-binding protein COQ10, mitochondrial (coq10-1).